Consider the following 550-residue polypeptide: MFCVQCEQTIRTPAGNGCSYAQGMCGKTAETSDLQDLLIAALQGLSAWAVKAREYGIINHDVDSFAPRAFFSTLTNVNFDSPRIVGYAREAIALREALKAQCLAVDANARVDNPMANLQLVSDDLGELQRQAAEFTPNKDKAAIGENILGLRLLCLYGLKGAAAYMEHAHVLGQYDNDIYAQYHKIMAWLGTWPADMNALLECSMEIGQMNFKVMSILDAGETGKYGHPTPTQVNVKATAGKCILISGHDLKDLYNLLEQTEGTGVNVYTHGEMLPAHGYPELRKFKHLVGNYGSGWQNQQVEFARFPGPIVMTSNCIIDPTVGAYDDRIWTRSIVGWPGVRHLDGEDFSAVIAQAQQMAGFPYSEIPHLITVGFGRQTLLGAADTLIDLVSREKLRHIFLLGGCDGARGERHYFTDFATSVPDDCLILTLACGKYRFNKLEFGDIEGLPRLVDAGQCNDAYSAIILAVTLAEKLGCGVNDLPLSLVLSWFEQKAIVILLTLLSLGVKNIVTGPTAPGFLTPDLLAVLNEKFGLRSITTVEEDMKQLLSA.

[2Fe-2S] cluster-binding residues include cysteine 3, cysteine 6, cysteine 18, and cysteine 25. Residues histidine 249, glutamate 273, cysteine 317, cysteine 405, cysteine 433, cysteine 458, glutamate 492, and lysine 494 each contribute to the hybrid [4Fe-2O-2S] cluster site. Cysteine 405 carries the cysteine persulfide modification.

It belongs to the HCP family. [2Fe-2S] cluster is required as a cofactor. The cofactor is hybrid [4Fe-2O-2S] cluster.

Its subcellular location is the cytoplasm. It catalyses the reaction A + NH4(+) + H2O = hydroxylamine + AH2 + H(+). Its function is as follows. Catalyzes the reduction of hydroxylamine to form NH(3) and H(2)O. The chain is Hydroxylamine reductase from Escherichia coli O139:H28 (strain E24377A / ETEC).